The following is a 188-amino-acid chain: Elongation factor P-like protein (188 aa).

Belongs to the elongation factor P family.

This is Elongation factor P-like protein from Stenotrophomonas maltophilia (strain R551-3).